Consider the following 185-residue polypeptide: MRFFLLLCFFLPCFQAINLGLKVLELCTTGSCISQSASCVTGDIVNVTQVDRTHVVMCADFRHIKYTDVGRTFRIKFSDVTCSWENTSPADVVFPGNHILQFTVLGVCFDNKVVGGCQNINEPCPEPHTVFHLQREDITLLELCVQAAGFNAQDVGVKYDFSLRHKNCLRYKRTLPPHEVVDEDY.

The signal sequence occupies residues 1 to 16; the sequence is MRFFLLLCFFLPCFQA.

In Rousettus leschenaultii (Leschenault's rousette), this protein is Non-structural protein 7a.